A 190-amino-acid polypeptide reads, in one-letter code: Putative 3-methyladenine DNA glycosylase (190 aa).

The protein belongs to the DNA glycosylase MPG family.

The chain is Putative 3-methyladenine DNA glycosylase from Deinococcus radiodurans (strain ATCC 13939 / DSM 20539 / JCM 16871 / CCUG 27074 / LMG 4051 / NBRC 15346 / NCIMB 9279 / VKM B-1422 / R1).